The following is a 462-amino-acid chain: Argininosuccinate lyase 2 (462 aa).

Belongs to the lyase 1 family. Argininosuccinate lyase subfamily.

It is found in the cytoplasm. It carries out the reaction 2-(N(omega)-L-arginino)succinate = fumarate + L-arginine. It participates in amino-acid biosynthesis; L-arginine biosynthesis; L-arginine from L-ornithine and carbamoyl phosphate: step 3/3. The chain is Argininosuccinate lyase 2 from Shouchella clausii (strain KSM-K16) (Alkalihalobacillus clausii).